We begin with the raw amino-acid sequence, 80 residues long: Clavanin-C (80 aa).

The N-terminal stretch at 1–19 (MKTTILILLILGLGINAKS) is a signal peptide. Positions 20-29 (LEERKSEEEK) are excised as a propeptide. At Phe52 the chain carries Phenylalanine amide. The propeptide occupies 54–80 (DDQQDNGKFYGHYAEDNGKHWYDTGDQ).

In terms of tissue distribution, hemocytes and pharyngeal tissues.

The protein localises to the secreted. Functionally, has antimicrobial activity against E.coli, L.monocytogenes and C.albicans. The chain is Clavanin-C from Styela clava (Sea squirt).